A 200-amino-acid chain; its full sequence is MAQQRALPQSKETLLQSYNKRLKDDIKSIMDNFTEIIKTAKIEDETQVSRATQGEQDNYEMHVRAANIVRAGESLMKLVSDLKQFLILNDFPSVNEAIDQRNQQLRALQEECDRKLITLRDEVSIDLYELEEEYYSSSSSLCEANDLPLCEAYWRLDLDADSADGLSAPLLASPETGAGPLQSAAPVHSHGGGPGPTEHT.

A coiled-coil region spans residues 93-122 (SVNEAIDQRNQQLRALQEECDRKLITLRDE). Residues 169-200 (PLLASPETGAGPLQSAAPVHSHGGGPGPTEHT) form a disordered region. Gly residues predominate over residues 190-200 (HGGGPGPTEHT).

It belongs to the Mediator complex subunit 22 family. In terms of assembly, component of the Mediator complex, which is composed of MED1, MED4, MED6, MED7, MED8, MED9, MED10, MED11, MED12, MED13, MED13L, MED14, MED15, MED16, MED17, MED18, MED19, MED20, MED21, MED22, MED23, MED24, MED25, MED26, MED27, MED29, MED30, MED31, CCNC, CDK8 and CDC2L6/CDK11. The MED12, MED13, CCNC and CDK8 subunits form a distinct module termed the CDK8 module. Mediator containing the CDK8 module is less active than Mediator lacking this module in supporting transcriptional activation. Individual preparations of the Mediator complex lacking one or more distinct subunits have been variously termed ARC, CRSP, DRIP, PC2, SMCC and TRAP.

It is found in the nucleus. Component of the Mediator complex, a coactivator involved in the regulated transcription of nearly all RNA polymerase II-dependent genes. Mediator functions as a bridge to convey information from gene-specific regulatory proteins to the basal RNA polymerase II transcription machinery. Mediator is recruited to promoters by direct interactions with regulatory proteins and serves as a scaffold for the assembly of a functional preinitiation complex with RNA polymerase II and the general transcription factors. The polypeptide is Mediator of RNA polymerase II transcription subunit 22 (Med22) (Mus musculus (Mouse)).